A 324-amino-acid chain; its full sequence is DNA repair and recombination protein RadA (324 aa).

114–121 (GEFGSGKT) contacts ATP.

Belongs to the eukaryotic RecA-like protein family.

Its function is as follows. Involved in DNA repair and in homologous recombination. Binds and assemble on single-stranded DNA to form a nucleoprotein filament. Hydrolyzes ATP in a ssDNA-dependent manner and promotes DNA strand exchange between homologous DNA molecules. This is DNA repair and recombination protein RadA from Sulfurisphaera tokodaii (strain DSM 16993 / JCM 10545 / NBRC 100140 / 7) (Sulfolobus tokodaii).